Reading from the N-terminus, the 721-residue chain is uncharacterized protein (721 aa).

Disordered stretches follow at residues 196–291 (TSMT…VGGP) and 370–513 (AGIP…AAEQ). Composition is skewed to low complexity over residues 202–224 (SPAG…TSGP) and 232–250 (SPFG…SSGP). Pro residues-rich tracts occupy residues 264–283 (PMPP…PPSA) and 379–389 (APTPSPAPIAP). The span at 419–429 (APAGPLPAYGA) shows a compositional bias: low complexity. Pro residues predominate over residues 435-446 (VTTPPATPPTPT). Residues 470-484 (VNKSTAPATTQAQPS) show a composition bias toward polar residues. The span at 491–505 (ASATAAATTGAAAGD) shows a compositional bias: low complexity.

This is an uncharacterized protein from Mycobacterium tuberculosis (strain ATCC 25618 / H37Rv).